We begin with the raw amino-acid sequence, 377 residues long: MAADLGPWNDTINGTWDGDELGYRCRFNEDFKYVLLPVSYGVVCVPGLCLNAVALYIFLCRLKTWNASTTYMFHLAVSDALYAASLPLLVYYYARGDHWPFSTVLCKLVRFLFYTNLYCSILFLTCISVHRCLGVLRPLRSLRWGRARYARRVAGAVWVLVLACQAPVLYFVTTSARGGRVTCHDTSAPELFSRFVAYSSVMLGLLFAVPFAVILVCYVLMARRLLKPAYGTSGGLPRAKRKSVRTIAVVLAVFALCFLPFHVTRTLYYSFRSLDLSCHTLNAINMAYKVTRPLASANSCLDPVLYFLAGQRLVRFARDAKPPTGPSPATPARRRLGLRRSDRTDMQRIEDVLGSSEDSRRTESTPAGSENTKDIRL.

The Extracellular segment spans residues 1-32 (MAADLGPWNDTINGTWDGDELGYRCRFNEDFK). N-linked (GlcNAc...) asparagine glycosylation is found at Asn-9 and Asn-13. A helical transmembrane segment spans residues 33–59 (YVLLPVSYGVVCVPGLCLNAVALYIFL). The Cytoplasmic portion of the chain corresponds to 60–70 (CRLKTWNASTT). Residues 71-93 (YMFHLAVSDALYAASLPLLVYYY) form a helical membrane-spanning segment. Residues 94–110 (ARGDHWPFSTVLCKLVR) are Extracellular-facing. Cysteines 106 and 183 form a disulfide. A helical membrane pass occupies residues 111–129 (FLFYTNLYCSILFLTCISV). Topologically, residues 130 to 152 (HRCLGVLRPLRSLRWGRARYARR) are cytoplasmic. The chain crosses the membrane as a helical span at residues 153–172 (VAGAVWVLVLACQAPVLYFV). Topologically, residues 173-194 (TTSARGGRVTCHDTSAPELFSR) are extracellular. Residues 195 to 220 (FVAYSSVMLGLLFAVPFAVILVCYVL) traverse the membrane as a helical segment. Topologically, residues 221–246 (MARRLLKPAYGTSGGLPRAKRKSVRT) are cytoplasmic. A helical membrane pass occupies residues 247–269 (IAVVLAVFALCFLPFHVTRTLYY). Over 270 to 287 (SFRSLDLSCHTLNAINMA) the chain is Extracellular. Residues 288–309 (YKVTRPLASANSCLDPVLYFLA) form a helical membrane-spanning segment. The Cytoplasmic portion of the chain corresponds to 310–377 (GQRLVRFARD…GSENTKDIRL (68 aa)). The disordered stretch occupies residues 318-377 (RDAKPPTGPSPATPARRRLGLRRSDRTDMQRIEDVLGSSEDSRRTESTPAGSENTKDIRL). The span at 339-363 (RRSDRTDMQRIEDVLGSSEDSRRTE) shows a compositional bias: basic and acidic residues.

It belongs to the G-protein coupled receptor 1 family. In terms of tissue distribution, spleen, testis, kidney, liver, lung, heart and brain.

Its subcellular location is the cell membrane. Functionally, receptor for ATP and UTP coupled to G-proteins that activate a phosphatidylinositol-calcium second messenger system. The affinity range is UTP = ATP &gt; ATP-gamma-S &gt;&gt; 2-methylthio-ATP = ADP. The chain is P2Y purinoceptor 2 (P2RY2) from Homo sapiens (Human).